Consider the following 124-residue polypeptide: uncharacterized protein (124 aa).

Residues 1 to 23 (MHKLLKLLSITLIGLSVATGVQA) form the signal peptide.

This sequence belongs to the cytochrome b562 family.

This is an uncharacterized protein from Pasteurella multocida (strain Pm70).